We begin with the raw amino-acid sequence, 842 residues long: Protein translocase subunit SecA 1 (842 aa).

Residues Gln-85, Gly-103–Thr-107, and Asp-493 each bind ATP. Cys-824, Cys-826, Cys-835, and His-836 together coordinate Zn(2+).

The protein belongs to the SecA family. In terms of assembly, monomer and homodimer. Part of the essential Sec protein translocation apparatus which comprises SecA, SecYEG and auxiliary proteins SecDF. Other proteins may also be involved. The cofactor is Zn(2+).

It is found in the cell membrane. The protein resides in the cytoplasm. It carries out the reaction ATP + H2O + cellular proteinSide 1 = ADP + phosphate + cellular proteinSide 2.. Functionally, part of the Sec protein translocase complex. Interacts with the SecYEG preprotein conducting channel. Has a central role in coupling the hydrolysis of ATP to the transfer of proteins into and across the cell membrane, serving as an ATP-driven molecular motor driving the stepwise translocation of polypeptide chains across the membrane. The polypeptide is Protein translocase subunit SecA 1 (Streptococcus agalactiae serotype Ia (strain ATCC 27591 / A909 / CDC SS700)).